The following is a 434-amino-acid chain: Tungsten-containing formylmethanofuran dehydrogenase 2 subunit B (434 aa).

A non-standard amino acid (selenocysteine) is located at residue selenocysteine 120.

The protein belongs to the FwdB family. As to quaternary structure, this enzyme is composed of six subunits FwdA, FwdC, FwdD, FwdE, FwdF and FwdG. It depends on W-bis(molybdopterin guanine dinucleotide) as a cofactor.

It carries out the reaction N-formylmethanofuran + 2 oxidized [2Fe-2S]-[ferredoxin] + H2O = methanofuran + 2 reduced [2Fe-2S]-[ferredoxin] + CO2 + H(+). It participates in one-carbon metabolism; methanogenesis from CO(2); 5,10-methenyl-5,6,7,8-tetrahydromethanopterin from CO(2): step 1/3. Functionally, catalyzes the reversible oxidation of CO(2) and methanofuran (MFR) to N-formylmethanofuran (CHO-MFR). This enzyme is oxygen-labile. This chain is Tungsten-containing formylmethanofuran dehydrogenase 2 subunit B (fwdB), found in Methanococcus maripaludis (strain DSM 14266 / JCM 13030 / NBRC 101832 / S2 / LL).